A 298-amino-acid polypeptide reads, in one-letter code: N-acetylmuramic acid 6-phosphate etherase (298 aa).

The 164-residue stretch at 55 to 218 (IHAQVSGGGR…STGLMIKSGK (164 aa)) folds into the SIS domain. The active-site Proton donor is the glutamate 83. Residue glutamate 114 is part of the active site.

This sequence belongs to the GCKR-like family. MurNAc-6-P etherase subfamily. As to quaternary structure, homodimer.

The catalysed reaction is N-acetyl-D-muramate 6-phosphate + H2O = N-acetyl-D-glucosamine 6-phosphate + (R)-lactate. Its pathway is amino-sugar metabolism; 1,6-anhydro-N-acetylmuramate degradation. It participates in amino-sugar metabolism; N-acetylmuramate degradation. It functions in the pathway cell wall biogenesis; peptidoglycan recycling. Its function is as follows. Specifically catalyzes the cleavage of the D-lactyl ether substituent of MurNAc 6-phosphate, producing GlcNAc 6-phosphate and D-lactate. Together with AnmK, is also required for the utilization of anhydro-N-acetylmuramic acid (anhMurNAc) either imported from the medium or derived from its own cell wall murein, and thus plays a role in cell wall recycling. This Shigella flexneri protein is N-acetylmuramic acid 6-phosphate etherase.